The primary structure comprises 365 residues: Histidinol-phosphate aminotransferase (365 aa).

A disordered region spans residues 1-21 (MSRPVPNPGILDIAPYTPGKS). Lysine 221 bears the N6-(pyridoxal phosphate)lysine mark.

The protein belongs to the class-II pyridoxal-phosphate-dependent aminotransferase family. Histidinol-phosphate aminotransferase subfamily. In terms of assembly, homodimer. Requires pyridoxal 5'-phosphate as cofactor.

It carries out the reaction L-histidinol phosphate + 2-oxoglutarate = 3-(imidazol-4-yl)-2-oxopropyl phosphate + L-glutamate. Its pathway is amino-acid biosynthesis; L-histidine biosynthesis; L-histidine from 5-phospho-alpha-D-ribose 1-diphosphate: step 7/9. The chain is Histidinol-phosphate aminotransferase from Rhodopseudomonas palustris (strain ATCC BAA-98 / CGA009).